The following is a 267-amino-acid chain: 2-keto-3-deoxy-L-rhamnonate aldolase (267 aa).

The Proton acceptor role is filled by histidine 49. Residue glutamine 151 coordinates substrate. Glutamate 153 contacts Mg(2+). Residues alanine 178 and aspartate 179 each contribute to the substrate site. A Mg(2+)-binding site is contributed by aspartate 179.

The protein belongs to the HpcH/HpaI aldolase family. KDR aldolase subfamily. Homohexamer. It depends on Mg(2+) as a cofactor.

The enzyme catalyses 2-dehydro-3-deoxy-L-rhamnonate = (S)-lactaldehyde + pyruvate. In terms of biological role, catalyzes the reversible retro-aldol cleavage of 2-keto-3-deoxy-L-rhamnonate (KDR) to pyruvate and lactaldehyde. The polypeptide is 2-keto-3-deoxy-L-rhamnonate aldolase (Escherichia coli O17:K52:H18 (strain UMN026 / ExPEC)).